Here is a 229-residue protein sequence, read N- to C-terminus: 3-isopropylmalate dehydratase small subunit (229 aa).

The interval K208 to I229 is disordered.

It belongs to the LeuD family. LeuD type 1 subfamily. In terms of assembly, heterodimer of LeuC and LeuD.

The catalysed reaction is (2R,3S)-3-isopropylmalate = (2S)-2-isopropylmalate. It functions in the pathway amino-acid biosynthesis; L-leucine biosynthesis; L-leucine from 3-methyl-2-oxobutanoate: step 2/4. Its function is as follows. Catalyzes the isomerization between 2-isopropylmalate and 3-isopropylmalate, via the formation of 2-isopropylmaleate. The sequence is that of 3-isopropylmalate dehydratase small subunit from Bifidobacterium longum subsp. infantis (strain ATCC 15697 / DSM 20088 / JCM 1222 / NCTC 11817 / S12).